The sequence spans 373 residues: Probable tRNA sulfurtransferase (373 aa).

The THUMP domain occupies 54–158 (NKNIEELSKV…NDVAYFYHKI (105 aa)). ATP is bound by residues 176–177 (LF), 201–202 (NF), lysine 256, glycine 278, and glutamine 287.

This sequence belongs to the ThiI family.

Its subcellular location is the cytoplasm. The catalysed reaction is [ThiI sulfur-carrier protein]-S-sulfanyl-L-cysteine + a uridine in tRNA + 2 reduced [2Fe-2S]-[ferredoxin] + ATP + H(+) = [ThiI sulfur-carrier protein]-L-cysteine + a 4-thiouridine in tRNA + 2 oxidized [2Fe-2S]-[ferredoxin] + AMP + diphosphate. It carries out the reaction [ThiS sulfur-carrier protein]-C-terminal Gly-Gly-AMP + S-sulfanyl-L-cysteinyl-[cysteine desulfurase] + AH2 = [ThiS sulfur-carrier protein]-C-terminal-Gly-aminoethanethioate + L-cysteinyl-[cysteine desulfurase] + A + AMP + 2 H(+). It participates in cofactor biosynthesis; thiamine diphosphate biosynthesis. Catalyzes the ATP-dependent transfer of a sulfur to tRNA to produce 4-thiouridine in position 8 of tRNAs, which functions as a near-UV photosensor. Also catalyzes the transfer of sulfur to the sulfur carrier protein ThiS, forming ThiS-thiocarboxylate. This is a step in the synthesis of thiazole, in the thiamine biosynthesis pathway. The sulfur is donated as persulfide by IscS. This Saccharolobus islandicus (strain M.16.4 / Kamchatka #3) (Sulfolobus islandicus) protein is Probable tRNA sulfurtransferase.